The chain runs to 514 residues: ATP synthase subunit alpha (514 aa).

170 to 177 (GDRQIGKT) is a binding site for ATP.

The protein belongs to the ATPase alpha/beta chains family. F-type ATPases have 2 components, CF(1) - the catalytic core - and CF(0) - the membrane proton channel. CF(1) has five subunits: alpha(3), beta(3), gamma(1), delta(1), epsilon(1). CF(0) has three main subunits: a(1), b(2) and c(9-12). The alpha and beta chains form an alternating ring which encloses part of the gamma chain. CF(1) is attached to CF(0) by a central stalk formed by the gamma and epsilon chains, while a peripheral stalk is formed by the delta and b chains.

The protein resides in the cell inner membrane. It carries out the reaction ATP + H2O + 4 H(+)(in) = ADP + phosphate + 5 H(+)(out). Produces ATP from ADP in the presence of a proton gradient across the membrane. The alpha chain is a regulatory subunit. This Pseudomonas entomophila (strain L48) protein is ATP synthase subunit alpha.